A 476-amino-acid polypeptide reads, in one-letter code: Siroheme synthase (476 aa).

The precorrin-2 dehydrogenase /sirohydrochlorin ferrochelatase stretch occupies residues 1-203 (MNYFPVFADL…RQIEAAKKEL (203 aa)). Residues 22-23 (TI) and 43-44 (QK) contribute to the NAD(+) site. The residue at position 128 (Ser128) is a Phosphoserine. Residues 214 to 476 (GSVSLVGAGP…LDSLRIERVA (263 aa)) are uroporphyrinogen-III C-methyltransferase. Pro223 is an S-adenosyl-L-methionine binding site. Asp246 (proton acceptor) is an active-site residue. Catalysis depends on Lys268, which acts as the Proton donor. S-adenosyl-L-methionine is bound by residues 299-301 (GGD), Val304, 329-330 (TA), Met381, and Gly410.

This sequence in the N-terminal section; belongs to the precorrin-2 dehydrogenase / sirohydrochlorin ferrochelatase family. The protein in the C-terminal section; belongs to the precorrin methyltransferase family.

The enzyme catalyses uroporphyrinogen III + 2 S-adenosyl-L-methionine = precorrin-2 + 2 S-adenosyl-L-homocysteine + H(+). It carries out the reaction precorrin-2 + NAD(+) = sirohydrochlorin + NADH + 2 H(+). It catalyses the reaction siroheme + 2 H(+) = sirohydrochlorin + Fe(2+). It functions in the pathway cofactor biosynthesis; adenosylcobalamin biosynthesis; precorrin-2 from uroporphyrinogen III: step 1/1. The protein operates within cofactor biosynthesis; adenosylcobalamin biosynthesis; sirohydrochlorin from precorrin-2: step 1/1. It participates in porphyrin-containing compound metabolism; siroheme biosynthesis; precorrin-2 from uroporphyrinogen III: step 1/1. Its pathway is porphyrin-containing compound metabolism; siroheme biosynthesis; siroheme from sirohydrochlorin: step 1/1. It functions in the pathway porphyrin-containing compound metabolism; siroheme biosynthesis; sirohydrochlorin from precorrin-2: step 1/1. In terms of biological role, multifunctional enzyme that catalyzes the SAM-dependent methylations of uroporphyrinogen III at position C-2 and C-7 to form precorrin-2 via precorrin-1. Then it catalyzes the NAD-dependent ring dehydrogenation of precorrin-2 to yield sirohydrochlorin. Finally, it catalyzes the ferrochelation of sirohydrochlorin to yield siroheme. This chain is Siroheme synthase, found in Mannheimia succiniciproducens (strain KCTC 0769BP / MBEL55E).